Consider the following 155-residue polypeptide: 6,7-dimethyl-8-ribityllumazine synthase (155 aa).

5-amino-6-(D-ribitylamino)uracil-binding positions include F23, 57–59 (AFE), and 81–83 (AVI). A (2S)-2-hydroxy-3-oxobutyl phosphate-binding site is contributed by 86–87 (ST). The Proton donor role is filled by H89. Position 114 (F114) interacts with 5-amino-6-(D-ribitylamino)uracil. R128 is a (2S)-2-hydroxy-3-oxobutyl phosphate binding site.

Belongs to the DMRL synthase family.

The enzyme catalyses (2S)-2-hydroxy-3-oxobutyl phosphate + 5-amino-6-(D-ribitylamino)uracil = 6,7-dimethyl-8-(1-D-ribityl)lumazine + phosphate + 2 H2O + H(+). Its pathway is cofactor biosynthesis; riboflavin biosynthesis; riboflavin from 2-hydroxy-3-oxobutyl phosphate and 5-amino-6-(D-ribitylamino)uracil: step 1/2. Its function is as follows. Catalyzes the formation of 6,7-dimethyl-8-ribityllumazine by condensation of 5-amino-6-(D-ribitylamino)uracil with 3,4-dihydroxy-2-butanone 4-phosphate. This is the penultimate step in the biosynthesis of riboflavin. The polypeptide is 6,7-dimethyl-8-ribityllumazine synthase (Citrifermentans bemidjiense (strain ATCC BAA-1014 / DSM 16622 / JCM 12645 / Bem) (Geobacter bemidjiensis)).